A 67-amino-acid polypeptide reads, in one-letter code: Sodium channel neurotoxin MeuNaTxalpha-10 (67 aa).

The LCN-type CS-alpha/beta domain maps to 2–66 (RDGYIAKPHN…VPIRIPGKCH (65 aa)). 4 disulfides stabilise this stretch: C12-C65, C16-C38, C24-C48, and C28-C50. Position 67 (R67) is a propeptide, removed by a carboxypeptidase.

The protein belongs to the long (4 C-C) scorpion toxin superfamily. Sodium channel inhibitor family. Alpha subfamily. As to expression, expressed by the venom gland.

Its subcellular location is the secreted. Functionally, alpha toxins bind voltage-independently at site-3 of sodium channels (Nav) and inhibit the inactivation of the activated channels, thereby blocking neuronal transmission. The sequence is that of Sodium channel neurotoxin MeuNaTxalpha-10 from Mesobuthus eupeus (Lesser Asian scorpion).